The sequence spans 249 residues: tRNA (guanine-N(1)-)-methyltransferase (249 aa).

Residues G118 and 138–143 contribute to the S-adenosyl-L-methionine site; that span reads IGDYVL.

The protein belongs to the RNA methyltransferase TrmD family. As to quaternary structure, homodimer.

The protein localises to the cytoplasm. It carries out the reaction guanosine(37) in tRNA + S-adenosyl-L-methionine = N(1)-methylguanosine(37) in tRNA + S-adenosyl-L-homocysteine + H(+). Its function is as follows. Specifically methylates guanosine-37 in various tRNAs. This Alkaliphilus oremlandii (strain OhILAs) (Clostridium oremlandii (strain OhILAs)) protein is tRNA (guanine-N(1)-)-methyltransferase.